The sequence spans 218 residues: Ras-related protein Rab-42 (218 aa).

The GTP site is built by Ala-19, Gly-21, Lys-22, Thr-23, and Thr-46. Mg(2+) contacts are provided by Thr-23, Thr-46, and Asp-70. Positions 73, 130, 132, 160, and 161 each coordinate GTP. S-geranylgeranyl cysteine attachment occurs at residues Cys-216 and Cys-218.

It belongs to the small GTPase superfamily. Rab family. Mg(2+) is required as a cofactor.

Its subcellular location is the membrane. The enzyme catalyses GTP + H2O = GDP + phosphate + H(+). With respect to regulation, regulated by guanine nucleotide exchange factors (GEFs) which promote the exchange of bound GDP for free GTP. Regulated by GTPase activating proteins (GAPs) which increase the GTP hydrolysis activity. Inhibited by GDP dissociation inhibitors (GDIs). The small GTPases Rab are key regulators of intracellular membrane trafficking, from the formation of transport vesicles to their fusion with membranes. Rabs cycle between an inactive GDP-bound form and an active GTP-bound form that is able to recruit to membranes different sets of downstream effectors directly responsible for vesicle formation, movement, tethering and fusion. The physiological function of RAB42 remains undefined. This chain is Ras-related protein Rab-42, found in Homo sapiens (Human).